Reading from the N-terminus, the 98-residue chain is NADH-ubiquinone oxidoreductase chain 4L (98 aa).

A run of 3 helical transmembrane segments spans residues 1–21 (MPYI…GMLI), 29–49 (SLLC…LTIL), and 61–81 (IILL…LVMV).

Belongs to the complex I subunit 4L family. In terms of assembly, core subunit of respiratory chain NADH dehydrogenase (Complex I) which is composed of 45 different subunits.

Its subcellular location is the mitochondrion inner membrane. The enzyme catalyses a ubiquinone + NADH + 5 H(+)(in) = a ubiquinol + NAD(+) + 4 H(+)(out). Core subunit of the mitochondrial membrane respiratory chain NADH dehydrogenase (Complex I) which catalyzes electron transfer from NADH through the respiratory chain, using ubiquinone as an electron acceptor. Part of the enzyme membrane arm which is embedded in the lipid bilayer and involved in proton translocation. The sequence is that of NADH-ubiquinone oxidoreductase chain 4L (MT-ND4L) from Cephalopachus bancanus (Western tarsier).